A 448-amino-acid polypeptide reads, in one-letter code: Probable glycine dehydrogenase (decarboxylating) subunit 1 (448 aa).

Belongs to the GcvP family. N-terminal subunit subfamily. In terms of assembly, the glycine cleavage system is composed of four proteins: P, T, L and H. In this organism, the P 'protein' is a heterodimer of two subunits.

The enzyme catalyses N(6)-[(R)-lipoyl]-L-lysyl-[glycine-cleavage complex H protein] + glycine + H(+) = N(6)-[(R)-S(8)-aminomethyldihydrolipoyl]-L-lysyl-[glycine-cleavage complex H protein] + CO2. Functionally, the glycine cleavage system catalyzes the degradation of glycine. The P protein binds the alpha-amino group of glycine through its pyridoxal phosphate cofactor; CO(2) is released and the remaining methylamine moiety is then transferred to the lipoamide cofactor of the H protein. The sequence is that of Probable glycine dehydrogenase (decarboxylating) subunit 1 from Thermomicrobium roseum (strain ATCC 27502 / DSM 5159 / P-2).